We begin with the raw amino-acid sequence, 88 residues long: Large ribosomal subunit protein bL27 (88 aa).

The tract at residues 1-20 is disordered; that stretch reads MASKKGVGSTKDGRDSIAKR.

This sequence belongs to the bacterial ribosomal protein bL27 family.

The sequence is that of Large ribosomal subunit protein bL27 (rpmA) from Geobacillus stearothermophilus (Bacillus stearothermophilus).